A 37-amino-acid chain; its full sequence is Large ribosomal subunit protein bL36c (37 aa).

It belongs to the bacterial ribosomal protein bL36 family.

The protein localises to the plastid. This chain is Large ribosomal subunit protein bL36c, found in Cuscuta exaltata (Tall dodder).